The chain runs to 87 residues: U3-theraphotoxin-Hhn1a 13 (87 aa).

The first 24 residues, Met1 to Ala24, serve as a signal peptide directing secretion. Residues Ser25–Arg52 constitute a propeptide that is removed on maturation. 3 disulfides stabilise this stretch: Cys54–Cys67, Cys61–Cys72, and Cys66–Cys79.

The protein belongs to the neurotoxin 10 (Hwtx-1) family. 51 (Hntx-8) subfamily. Hntx-8 sub-subfamily. Expressed by the venom gland.

It localises to the secreted. In terms of biological role, ion channel inhibitor. The polypeptide is U3-theraphotoxin-Hhn1a 13 (Cyriopagopus hainanus (Chinese bird spider)).